The following is a 419-amino-acid chain: Lipoyl synthase, mitochondrial (419 aa).

The transit peptide at 1–26 (MAVCAGRLKCFGNPAVSLRTAASRAY) directs the protein to the mitochondrion. Residues 28–47 (TTTSPDPAIPSSSSASSSSA) are compositionally biased toward low complexity. The segment at 28 to 61 (TTTSPDPAIPSSSSASSSSALPKRPQTSFRDKLN) is disordered. Positions 136, 141, 147, 167, 171, 174, and 382 each coordinate [4Fe-4S] cluster. The Radical SAM core domain maps to 150–371 (GSSKSAATAT…KDRALEMGFL (222 aa)). The tract at residues 399–419 (AESTGPESTNVPNVTPDAIVR) is disordered.

The protein belongs to the radical SAM superfamily. Lipoyl synthase family. [4Fe-4S] cluster is required as a cofactor.

The protein localises to the mitochondrion. It carries out the reaction [[Fe-S] cluster scaffold protein carrying a second [4Fe-4S](2+) cluster] + N(6)-octanoyl-L-lysyl-[protein] + 2 oxidized [2Fe-2S]-[ferredoxin] + 2 S-adenosyl-L-methionine + 4 H(+) = [[Fe-S] cluster scaffold protein] + N(6)-[(R)-dihydrolipoyl]-L-lysyl-[protein] + 4 Fe(3+) + 2 hydrogen sulfide + 2 5'-deoxyadenosine + 2 L-methionine + 2 reduced [2Fe-2S]-[ferredoxin]. Its pathway is protein modification; protein lipoylation via endogenous pathway; protein N(6)-(lipoyl)lysine from octanoyl-[acyl-carrier-protein]: step 2/2. In terms of biological role, catalyzes the radical-mediated insertion of two sulfur atoms into the C-6 and C-8 positions of the octanoyl moiety bound to the lipoyl domains of lipoate-dependent enzymes, thereby converting the octanoylated domains into lipoylated derivatives. The sequence is that of Lipoyl synthase, mitochondrial from Coccidioides posadasii (strain C735) (Valley fever fungus).